We begin with the raw amino-acid sequence, 548 residues long: Luciferin 4-monooxygenase (548 aa).

The short motif at 546–548 (AKM) is the Microbody targeting signal element.

Belongs to the ATP-dependent AMP-binding enzyme family. Requires Mg(2+) as cofactor.

It is found in the peroxisome. It carries out the reaction firefly D-luciferin + ATP + O2 = firefly oxyluciferin + hnu + AMP + CO2 + diphosphate. Functionally, produces green light with a wavelength of 544 nm. The protein is Luciferin 4-monooxygenase of Nipponoluciola cruciata (Genji firefly).